Reading from the N-terminus, the 273-residue chain is 4-hydroxy-tetrahydrodipicolinate reductase (273 aa).

NAD(+) is bound by residues 12–17 (GAGGRM) and E38. R39 contributes to the NADP(+) binding site. Residues 102-104 (GTT) and 126-129 (AANF) contribute to the NAD(+) site. H159 functions as the Proton donor/acceptor in the catalytic mechanism. Residue H160 participates in (S)-2,3,4,5-tetrahydrodipicolinate binding. The active-site Proton donor is the K163. 169–170 (GT) contacts (S)-2,3,4,5-tetrahydrodipicolinate.

It belongs to the DapB family. Homotetramer.

It localises to the cytoplasm. The catalysed reaction is (S)-2,3,4,5-tetrahydrodipicolinate + NAD(+) + H2O = (2S,4S)-4-hydroxy-2,3,4,5-tetrahydrodipicolinate + NADH + H(+). It catalyses the reaction (S)-2,3,4,5-tetrahydrodipicolinate + NADP(+) + H2O = (2S,4S)-4-hydroxy-2,3,4,5-tetrahydrodipicolinate + NADPH + H(+). Its pathway is amino-acid biosynthesis; L-lysine biosynthesis via DAP pathway; (S)-tetrahydrodipicolinate from L-aspartate: step 4/4. Functionally, catalyzes the conversion of 4-hydroxy-tetrahydrodipicolinate (HTPA) to tetrahydrodipicolinate. This is 4-hydroxy-tetrahydrodipicolinate reductase from Shigella boydii serotype 18 (strain CDC 3083-94 / BS512).